A 277-amino-acid polypeptide reads, in one-letter code: MEIITDIAPLRARLRHEASVAFVPTMGNLHAGHLSLVRIAQKHASCSVVSIFVNRLQFAPHEDFDRYPRTWSDDCRLLEEQGADIVFMPDEKTLYPVPQEFQLLLPPVADTLEGACRPGFFRGVTTVVLKLFNIVQPHIAVFGEKDYQQLQVVHRMVDQLNLPVEIIAGETVRDEDGLALSSRNNYLDATQRQEAGELAHHLKQIRDSIASGERDFPLLEQLAAEKLSKRGWVVDYVAVRQQHTLLPVAASDSSLVILGAAWLNQTRLIDNFLLTLP.

Residue 26 to 33 participates in ATP binding; that stretch reads MGNLHAGH. Catalysis depends on His-33, which acts as the Proton donor. Residue Gln-57 participates in (R)-pantoate binding. Gln-57 contacts beta-alanine. An ATP-binding site is contributed by 143 to 146; it reads GEKD. Gln-149 is a binding site for (R)-pantoate. Residues Val-172 and 180-183 each bind ATP; that span reads LSSR.

The protein belongs to the pantothenate synthetase family. As to quaternary structure, homodimer.

It localises to the cytoplasm. It carries out the reaction (R)-pantoate + beta-alanine + ATP = (R)-pantothenate + AMP + diphosphate + H(+). It participates in cofactor biosynthesis; (R)-pantothenate biosynthesis; (R)-pantothenate from (R)-pantoate and beta-alanine: step 1/1. Catalyzes the condensation of pantoate with beta-alanine in an ATP-dependent reaction via a pantoyl-adenylate intermediate. The sequence is that of Pantothenate synthetase from Nitrosomonas europaea (strain ATCC 19718 / CIP 103999 / KCTC 2705 / NBRC 14298).